Consider the following 314-residue polypeptide: Zinc transporter ZIP3 (314 aa).

Topologically, residues 1–3 (MVK) are extracellular. Residues 4-24 (LLVAKILCMVGVFFFMLLGSL) form a helical membrane-spanning segment. Residues 25–42 (LPVKIIETDFEKAHRSKK) are Cytoplasmic-facing. The helical transmembrane segment at 43–63 (ILSLCNTFGGGVFLATCFNAL) threads the bilayer. The Extracellular segment spans residues 64 to 85 (LPAVREKLQKVLSLGHISTDYP). Residues 86 to 106 (LAETILLLGFFMTVFLEQLIL) traverse the membrane as a helical segment. Over 107–169 (TFRKEKPSFI…QGLSRASPVR (63 aa)) the chain is Cytoplasmic. Phosphoserine occurs at positions 125 and 129. The chain crosses the membrane as a helical span at residues 170 to 190 (LLSLAFALSAHSVFEGLALGL). Residues 191–196 (QEEGEK) lie on the Extracellular side of the membrane. The helical transmembrane segment at 197–217 (VVSLFVGVAVHETLVAVALGI) threads the bilayer. Residues 218–229 (SMARSAMPLRDA) are Cytoplasmic-facing. The helical transmembrane segment at 230-250 (AKLAVTVSAMIPLGIGLGLGI) threads the bilayer. At 251–262 (ESAQGVPGSVAS) the chain is on the extracellular side. The helical transmembrane segment at 263–283 (VLLQGLAGGTFLFITFLEILA) threads the bilayer. Residues 284–292 (KELEEKSDR) are Cytoplasmic-facing. A helical membrane pass occupies residues 293–313 (LLKVLFLVLGYTVLAGMVFLK). Residue W314 is a topological domain, extracellular.

Belongs to the ZIP transporter (TC 2.A.5) family.

Its subcellular location is the cell membrane. It is found in the apical cell membrane. The enzyme catalyses Zn(2+)(in) = Zn(2+)(out). Functionally, transporter for the divalent cation Zn(2+). Mediates the influx of Zn(2+) into cells from extracellular space. Controls Zn(2+) accumulation into dentate gyrus granule cells in the hippocampus. Mediates Zn(2+) reuptake from the secreted milk within the alveolar lumen. The chain is Zinc transporter ZIP3 from Homo sapiens (Human).